Consider the following 346-residue polypeptide: tRNA N6-adenosine threonylcarbamoyltransferase (346 aa).

His120, His124, and Tyr141 together coordinate a divalent metal cation. Residues 141–145 (YVSGG), Asp173, Gly188, Glu192, and Asn277 each bind substrate. Asp305 is an a divalent metal cation binding site.

The protein belongs to the KAE1 / TsaD family. As to quaternary structure, component of the EKC/KEOPS complex composed of at least BUD32, CGI121, GON7, KAE1 and PCC1; the whole complex dimerizes. Requires a divalent metal cation as cofactor.

It localises to the cytoplasm. The protein resides in the nucleus. It catalyses the reaction L-threonylcarbamoyladenylate + adenosine(37) in tRNA = N(6)-L-threonylcarbamoyladenosine(37) in tRNA + AMP + H(+). Component of the EKC/KEOPS complex that is required for the formation of a threonylcarbamoyl group on adenosine at position 37 (t(6)A37) in tRNAs that read codons beginning with adenine. The complex is probably involved in the transfer of the threonylcarbamoyl moiety of threonylcarbamoyl-AMP (TC-AMP) to the N6 group of A37. KAE1 likely plays a direct catalytic role in this reaction, but requires other protein(s) of the complex to fulfill this activity. The EKC/KEOPS complex also promotes both telomere uncapping and telomere elongation. The complex is required for efficient recruitment of transcriptional coactivators. This Gibberella zeae (strain ATCC MYA-4620 / CBS 123657 / FGSC 9075 / NRRL 31084 / PH-1) (Wheat head blight fungus) protein is tRNA N6-adenosine threonylcarbamoyltransferase.